The chain runs to 1219 residues: Cullin-associated NEDD8-dissociated protein 1 (1219 aa).

Residue Ala2 is modified to N-acetylalanine. HEAT repeat units lie at residues 44–81, 83–119, 209–244, 248–288, 327–363, 367–404, 423–460, 464–503, 599–636, 639–676, 808–848, 850–883, 927–964, 966–998, 1002–1039, 1043–1079, 1101–1137, and 1141–1180; these read DLEVRLSSIILQQLDDVAGDVSGLAVKCLAPLVKKVGE, RIVEMTNKLCDKLLHGKDQHRDTASIALRTVVAQIAP, KATVEVVKNLSNRNAKSEITRTNIQMIGALCRAVGY, THLG…RCPR, EEDDESANEYTDDEDASWKVRRAAAKCLAGLIVSRSE, KVYQEACPKLIDRFKEREENVKMDVFNTFIDLLRQTGN, QEVSKIVKSINRQLREKSVKTKVGAFSVLRELVVVLPD, DHIGSLVPGIERALNDKSSTSNLKIEALVFTKLVLASHAP, AELPSCLPVLVDRMGNEITRLTAVKAFSVIATSPLHIN, CVLDHLIAELTGFLRKANRVLRQATLITMNTLVTAYGD, KNCS…RKDL, AHAGIETIVIESFQSPFEEIKSAASYALGNIAVG, SSVEKILALLFNHCESEEEGVRNVVAECLGKMALIEPE, LVPALQVRTTSPAAFTRATVVTAVKYSVVERPE, EIIFPQISSFLMLIKDGDRHVRRAAVSALSTFAHYKPN, GLLPELLPLLYDQTVIKKELIRTVDLGPFKHVVDDGL, NPSSFIVPFLKSGLEDHYDLKMLCHLILSLLADKCPS, and AVLDSLVEPLHKTISFKPKQDAVKQEHDRNEDMIRSALRA. The disordered stretch occupies residues 311 to 340; that stretch reads FTDNMEEDTDNETLEDEEDDESANEYTDDE. Positions 314 to 340 are enriched in acidic residues; the sequence is NMEEDTDNETLEDEEDDESANEYTDDE.

This sequence belongs to the CAND family. Interacts with CUL1 and CUL4. Binds unneddylated CUL1, but cannot bind CUL1 once it has been neddylated. As to expression, highly expressed in roots. Expressed in stems, flowers and siliques.

Functionally, key assembly factor of SCF (SKP1-CUL1-F-box protein) E3 ubiquitin ligase complexes that promotes the exchange of the substrate-recognition F-box subunit in SCF complexes, thereby playing a key role in the cellular repertoire of SCF complexes. Acts as a F-box protein exchange factor. Required for SCF(TIR1) function. Modulates SCF(TIR1) function through its interactions with the CUL1 subunit. Represses photomorphogenesis by promoting HY5 degradation in darkness. This Arabidopsis thaliana (Mouse-ear cress) protein is Cullin-associated NEDD8-dissociated protein 1 (CAND1).